A 617-amino-acid chain; its full sequence is Probable Xaa-Pro aminopeptidase P (617 aa).

Mn(2+)-binding residues include Asp-414, Asp-425, Glu-523, and Glu-537.

The protein belongs to the peptidase M24B family. Mn(2+) serves as cofactor.

It catalyses the reaction Release of any N-terminal amino acid, including proline, that is linked to proline, even from a dipeptide or tripeptide.. Its function is as follows. Catalyzes the removal of a penultimate prolyl residue from the N-termini of peptides. The sequence is that of Probable Xaa-Pro aminopeptidase P (AMPP) from Blastomyces gilchristii (strain SLH14081) (Blastomyces dermatitidis).